Consider the following 124-residue polypeptide: Large ribosomal subunit protein bL12c (124 aa).

Belongs to the bacterial ribosomal protein bL12 family. As to quaternary structure, homodimer. Part of the ribosomal stalk of the 50S ribosomal subunit. Forms a multimeric L10(L12)X complex, where L10 forms an elongated spine to which 2 to 4 L12 dimers bind in a sequential fashion. Binds GTP-bound translation factors.

The protein localises to the plastid. The protein resides in the chloroplast. Forms part of the ribosomal stalk which helps the ribosome interact with GTP-bound translation factors. Is thus essential for accurate translation. In Cyanidioschyzon merolae (strain NIES-3377 / 10D) (Unicellular red alga), this protein is Large ribosomal subunit protein bL12c.